Here is a 476-residue protein sequence, read N- to C-terminus: Bifunctional protein HldE (476 aa).

The segment at 1–318 (MKPILPDYNN…AEAIHGSRDT (318 aa)) is ribokinase. 195 to 198 (NMSE) lines the ATP pocket. The active site involves aspartate 264. The segment at 344–476 (MTNGCFDILH…IIDAIKGGRG (133 aa)) is cytidylyltransferase.

This sequence in the N-terminal section; belongs to the carbohydrate kinase PfkB family. In the C-terminal section; belongs to the cytidylyltransferase family. In terms of assembly, homodimer.

The catalysed reaction is D-glycero-beta-D-manno-heptose 7-phosphate + ATP = D-glycero-beta-D-manno-heptose 1,7-bisphosphate + ADP + H(+). It catalyses the reaction D-glycero-beta-D-manno-heptose 1-phosphate + ATP + H(+) = ADP-D-glycero-beta-D-manno-heptose + diphosphate. Its pathway is nucleotide-sugar biosynthesis; ADP-L-glycero-beta-D-manno-heptose biosynthesis; ADP-L-glycero-beta-D-manno-heptose from D-glycero-beta-D-manno-heptose 7-phosphate: step 1/4. It participates in nucleotide-sugar biosynthesis; ADP-L-glycero-beta-D-manno-heptose biosynthesis; ADP-L-glycero-beta-D-manno-heptose from D-glycero-beta-D-manno-heptose 7-phosphate: step 3/4. The protein operates within bacterial outer membrane biogenesis; LPS core biosynthesis. Catalyzes the phosphorylation of D-glycero-D-manno-heptose 7-phosphate at the C-1 position to selectively form D-glycero-beta-D-manno-heptose-1,7-bisphosphate. Its function is as follows. Catalyzes the ADP transfer from ATP to D-glycero-beta-D-manno-heptose 1-phosphate, yielding ADP-D-glycero-beta-D-manno-heptose. In Vibrio vulnificus (strain YJ016), this protein is Bifunctional protein HldE.